Consider the following 61-residue polypeptide: Large ribosomal subunit protein uL30 (61 aa).

Belongs to the universal ribosomal protein uL30 family. In terms of assembly, part of the 50S ribosomal subunit.

The protein is Large ribosomal subunit protein uL30 of Chlorobium phaeobacteroides (strain BS1).